The chain runs to 377 residues: Anhydro-N-acetylmuramic acid kinase (377 aa).

Position 19 to 26 (19 to 26 (GTSLDGVD)) interacts with ATP.

The protein belongs to the anhydro-N-acetylmuramic acid kinase family.

It catalyses the reaction 1,6-anhydro-N-acetyl-beta-muramate + ATP + H2O = N-acetyl-D-muramate 6-phosphate + ADP + H(+). The protein operates within amino-sugar metabolism; 1,6-anhydro-N-acetylmuramate degradation. It participates in cell wall biogenesis; peptidoglycan recycling. Catalyzes the specific phosphorylation of 1,6-anhydro-N-acetylmuramic acid (anhMurNAc) with the simultaneous cleavage of the 1,6-anhydro ring, generating MurNAc-6-P. Is required for the utilization of anhMurNAc either imported from the medium or derived from its own cell wall murein, and thus plays a role in cell wall recycling. This chain is Anhydro-N-acetylmuramic acid kinase, found in Roseobacter denitrificans (strain ATCC 33942 / OCh 114) (Erythrobacter sp. (strain OCh 114)).